Consider the following 686-residue polypeptide: DNA ligase 1 (686 aa).

Residues 35-39, 84-85, and glutamate 119 each bind NAD(+); these read DFEYD and SL. Lysine 121 acts as the N6-AMP-lysine intermediate in catalysis. NAD(+)-binding residues include arginine 142, glutamate 177, lysine 293, and lysine 317. Positions 411, 414, 429, and 434 each coordinate Zn(2+). In terms of domain architecture, BRCT spans 602–686; it reads RVGEQLAGLT…LAEKGAPPLP (85 aa).

This sequence belongs to the NAD-dependent DNA ligase family. LigA subfamily. Mg(2+) is required as a cofactor. The cofactor is Mn(2+).

It carries out the reaction NAD(+) + (deoxyribonucleotide)n-3'-hydroxyl + 5'-phospho-(deoxyribonucleotide)m = (deoxyribonucleotide)n+m + AMP + beta-nicotinamide D-nucleotide.. In terms of biological role, DNA ligase that catalyzes the formation of phosphodiester linkages between 5'-phosphoryl and 3'-hydroxyl groups in double-stranded DNA using NAD as a coenzyme and as the energy source for the reaction. It is essential for DNA replication and repair of damaged DNA. The sequence is that of DNA ligase 1 from Deinococcus deserti (strain DSM 17065 / CIP 109153 / LMG 22923 / VCD115).